The following is a 377-amino-acid chain: MQAKTVTIKLDKHCYDIIIGPDLIAQAALQIKHSLKQKNFHQMRLAIVTDTNVASLHLDALQAELTKNKIHTFPIIVKAGEQSKSFSTLQVVIDQILAARLERGDCVIAFGGGVIGDLAGFAASMIRRGMNFIQMPTTLLAQIDSSVGGKTGINSRHGKNLIGAFYQPQCVIADTSVLDTLPPREFRAGYAEMVKYGLINQPDFFEWLEKNGQKIFSNGAIRIEAIVRSCQFKATIVARDEYETGERALLNLGHTFGHMLETATAYDSKRLIHGESVAIGMILAHQFSAQLNLVAPTLINRIETHLKAVGLPTQLKDIPGDLPNAETLMALIAQDKKVSQNNLTFILSRGLGQSFIAKNVPPDLVLSFLEQKLTEIR.

Residues glycine 113–aspartate 117, threonine 137–threonine 138, lysine 150, and lysine 159 each bind NAD(+). The Zn(2+) site is built by glutamate 192, histidine 254, and histidine 273.

It belongs to the sugar phosphate cyclases superfamily. Dehydroquinate synthase family. The cofactor is Co(2+). Requires Zn(2+) as cofactor. NAD(+) serves as cofactor.

It is found in the cytoplasm. It carries out the reaction 7-phospho-2-dehydro-3-deoxy-D-arabino-heptonate = 3-dehydroquinate + phosphate. It participates in metabolic intermediate biosynthesis; chorismate biosynthesis; chorismate from D-erythrose 4-phosphate and phosphoenolpyruvate: step 2/7. Functionally, catalyzes the conversion of 3-deoxy-D-arabino-heptulosonate 7-phosphate (DAHP) to dehydroquinate (DHQ). This chain is 3-dehydroquinate synthase, found in Bartonella tribocorum (strain CIP 105476 / IBS 506).